Reading from the N-terminus, the 632-residue chain is Armadillo repeat-containing X-linked protein 2 (632 aa).

Residues 1 to 6 (MSRVRD) lie on the Mitochondrial intermembrane side of the membrane. The mitochondrion outer membrane (MOM)-targeting sequence stretch occupies residues 1-6 (MSRVRD). Residues 7-25 (AGCVAAGIVIGAGAWYCVY) traverse the membrane as a helical; Signal-anchor segment. Residues 26 to 40 (KYTRGRDQTKKRMAK) form a mitochondrion outer membrane (MOM)-targeting sequence region. Over 26 to 632 (KYTRGRDQTK…VKVIKLVNKF (607 aa)) the chain is Cytoplasmic. Disordered stretches follow at residues 68–124 (GFSP…AGVG), 160–304 (APKV…KVEV), and 335–369 (VPDS…RPVA). 2 stretches are compositionally biased toward low complexity: residues 86 to 120 (EASA…EADG) and 211 to 241 (VASP…SPGT). The segment covering 336–356 (PDSEEGESGWTDTESDSDSEP) has biased composition (acidic residues). 3 ARM repeats span residues 376–416 (PYEI…NNAN), 418–457 (SCNQ…NLSE), and 498–537 (ITND…NFAE).

It belongs to the eutherian X-chromosome-specific Armcx family. As to expression, expressed at high levels ovary, heart, testis, prostate, brain, spleen and colon. Expressed at very low levels in liver and thymus. Not expressed in peripheral blood leukocytes. Not expressed in pancreas and ovarian carcinomas.

Its subcellular location is the mitochondrion. The protein localises to the mitochondrion outer membrane. Its function is as follows. May regulate the dynamics and distribution of mitochondria in neural cells. In Homo sapiens (Human), this protein is Armadillo repeat-containing X-linked protein 2 (ARMCX2).